We begin with the raw amino-acid sequence, 666 residues long: ATP synthase subunit alpha 2 (666 aa).

Residue 182 to 189 coordinates ATP; that stretch reads GDRATGKT. Positions 527–666 are disordered; it reads MPAEDAAGDI…DAEAEARHKR (140 aa). Basic and acidic residues predominate over residues 545–590; that stretch reads ARGDADRDADHGANREVSREVSPEASREVSREVSCEVSHEADRDAA. Residues 591–601 show a composition bias toward low complexity; that stretch reads ADAARVAGRAP. A compositionally biased stretch (basic and acidic residues) spans 623–641; it reads ADGDRASASRPRPDARGDA.

It belongs to the ATPase alpha/beta chains family. As to quaternary structure, F-type ATPases have 2 components, CF(1) - the catalytic core - and CF(0) - the membrane proton channel. CF(1) has five subunits: alpha(3), beta(3), gamma(1), delta(1), epsilon(1). CF(0) has three main subunits: a(1), b(2) and c(9-12). The alpha and beta chains form an alternating ring which encloses part of the gamma chain. CF(1) is attached to CF(0) by a central stalk formed by the gamma and epsilon chains, while a peripheral stalk is formed by the delta and b chains.

The protein resides in the cell inner membrane. It catalyses the reaction ATP + H2O + 4 H(+)(in) = ADP + phosphate + 5 H(+)(out). In terms of biological role, produces ATP from ADP in the presence of a proton gradient across the membrane. The alpha chain is a regulatory subunit. This chain is ATP synthase subunit alpha 2, found in Burkholderia pseudomallei (strain K96243).